The following is a 355-amino-acid chain: Cyanide hydratase (355 aa).

In terms of domain architecture, CN hydrolase spans 6–286 (YKAAAVTSEP…GLLFVDIDLN (281 aa)). The active-site Proton acceptor is the E46. Residue K128 is part of the active site. The active-site Nucleophile is C163.

The protein belongs to the carbon-nitrogen hydrolase superfamily. Nitrilase family. Oligomer of dimers, forming left-handed helical fibers.

The enzyme catalyses formamide = hydrogen cyanide + H2O. Functionally, catalyzes the hydration of cyanide to formamide. Degradation of cyanide may be important for plant pathogenic fungi in infection of cyanogenic plants. Also has low but significant nitrilase activity with acetonitrile, propionitrile and benzonitrile. The protein is Cyanide hydratase of Gibberella baccata (Fusarium lateritium).